The primary structure comprises 466 residues: MKKKLYIKTYGCQMNVYDSGRMADVLAPLGYEPTDAPDGADMVILNTCHIREKAAEKVYSDLGRLRPLQAARAATGGRMIVAVGGCVAQAEGAEIMMRAPHVDMVFGPQTYHQLPEMVARAVRGTGGVVNTDFPVESKFDSLPEEGASPAGPSAFLSVQEGCDKFCTYCVVPYTRGAEFSRPAARVLAEAARLVADGVAEITLLGQNVNAYHGDGPDGTTWGLGRLVRNLAEIDGLARIRYTTSHPNDMDAELIAAHAEVPQLMPFVHLPVQSGNDRILQAMNRKHTADDYRRVVERMRAARPDLALSSDFIVGFPGETDQEFADTLRLVTEIGYAQAYSFKYSARPGTPAAAMDGRQVPESVKAERLEALQQLLTAQQTAFNTACVGRVQPVLFDRRGKKPGQLLGRGPWMQAVHAEAPERLLGRIVEVRIADAHANSLSGTVVVGEHVHAHPVAPETASAEAGV.

One can recognise an MTTase N-terminal domain in the interval 3–123 (KKLYIKTYGC…LPEMVARAVR (121 aa)). Residues Cys12, Cys48, Cys86, Cys162, Cys166, and Cys169 each contribute to the [4Fe-4S] cluster site. The 234-residue stretch at 148 to 381 (SPAGPSAFLS…QQLLTAQQTA (234 aa)) folds into the Radical SAM core domain. The 63-residue stretch at 384-446 (TACVGRVQPV…ANSLSGTVVV (63 aa)) folds into the TRAM domain.

Belongs to the methylthiotransferase family. MiaB subfamily. Monomer. It depends on [4Fe-4S] cluster as a cofactor.

The protein localises to the cytoplasm. The catalysed reaction is N(6)-dimethylallyladenosine(37) in tRNA + (sulfur carrier)-SH + AH2 + 2 S-adenosyl-L-methionine = 2-methylsulfanyl-N(6)-dimethylallyladenosine(37) in tRNA + (sulfur carrier)-H + 5'-deoxyadenosine + L-methionine + A + S-adenosyl-L-homocysteine + 2 H(+). In terms of biological role, catalyzes the methylthiolation of N6-(dimethylallyl)adenosine (i(6)A), leading to the formation of 2-methylthio-N6-(dimethylallyl)adenosine (ms(2)i(6)A) at position 37 in tRNAs that read codons beginning with uridine. This chain is tRNA-2-methylthio-N(6)-dimethylallyladenosine synthase, found in Rhodospirillum centenum (strain ATCC 51521 / SW).